Consider the following 92-residue polypeptide: MTRSLKKGPFVDHHLVAKADKAVTNKDKKPIKTWSRRSMILPEFIGLTIAVHNGKQHVPVYITDQMVGHKLGEFALTRTFKGHPADKKVVKK.

This sequence belongs to the universal ribosomal protein uS19 family.

Its function is as follows. Protein S19 forms a complex with S13 that binds strongly to the 16S ribosomal RNA. The protein is Small ribosomal subunit protein uS19 of Polaromonas sp. (strain JS666 / ATCC BAA-500).